We begin with the raw amino-acid sequence, 317 residues long: tRNA pseudouridine synthase B (317 aa).

The active-site Nucleophile is aspartate 47.

It belongs to the pseudouridine synthase TruB family. Type 1 subfamily.

It carries out the reaction uridine(55) in tRNA = pseudouridine(55) in tRNA. Functionally, responsible for synthesis of pseudouridine from uracil-55 in the psi GC loop of transfer RNAs. The polypeptide is tRNA pseudouridine synthase B (Shewanella denitrificans (strain OS217 / ATCC BAA-1090 / DSM 15013)).